A 476-amino-acid chain; its full sequence is MIKKENLTYGKVHQVIGPVVDVIFSESKQLPRVYDCLSVQLKKSELFLEATQLIGDDIVRCIALGPTEGLARNVKVTNYNHPIEVPVGKNVLGRMFNVLGEPIDGKEPLPKKPKLSIHRNPPAFDEQPNTVDIFETGIKVIDLLTPYVRGGKIGLFGGAGVGKTVLVQELIHNIAKEHSGLSVFAGVGERTREGNDLYYEMIQGGVIDKTVLVFGQMNEPPGARMRVALTALTMAEYFRDHDNQNVLLFIDNIFRFTQAGSEVSALLGRMPSAVGYQPTLAIEMGKLQERIASTKTGSITSVQAIYVPADDLTDPAPATTFTHLDAKTVLDRNIAALGIFPAINPLESTSRLLDPSVVGINHYKVALGVQNILQRFAELQDIIAILGIDELSDEDKIIVERARRIRNFLSQPFFVAEKFSGIAGKYVSLNDTVQSFKEILEGKHDHLPEQAFFYVGTIQEAVEKAKRLNQEFDKTK.

157–164 (GGAGVGKT) serves as a coordination point for ATP.

It belongs to the ATPase alpha/beta chains family. F-type ATPases have 2 components, CF(1) - the catalytic core - and CF(0) - the membrane proton channel. CF(1) has five subunits: alpha(3), beta(3), gamma(1), delta(1), epsilon(1). CF(0) has three main subunits: a(1), b(2) and c(9-12). The alpha and beta chains form an alternating ring which encloses part of the gamma chain. CF(1) is attached to CF(0) by a central stalk formed by the gamma and epsilon chains, while a peripheral stalk is formed by the delta and b chains.

The protein resides in the cell membrane. It catalyses the reaction ATP + H2O + 4 H(+)(in) = ADP + phosphate + 5 H(+)(out). Produces ATP from ADP in the presence of a proton gradient across the membrane. The catalytic sites are hosted primarily by the beta subunits. This chain is ATP synthase subunit beta, found in Mycoplasma genitalium (strain ATCC 33530 / DSM 19775 / NCTC 10195 / G37) (Mycoplasmoides genitalium).